The chain runs to 329 residues: Beta-ribofuranosylphenol 5'-phosphate synthase (329 aa).

Belongs to the beta-RFA-P synthase family. In terms of assembly, homodimer. Requires Mg(2+) as cofactor.

It carries out the reaction 5-phospho-alpha-D-ribose 1-diphosphate + 4-hydroxybenzoate + H(+) = 4-(beta-D-ribofuranosyl)phenol 5'-phosphate + CO2 + diphosphate. It catalyses the reaction 4-aminobenzoate + 5-phospho-alpha-D-ribose 1-diphosphate + H(+) = 4-(beta-D-ribofuranosyl)aminobenzene 5'-phosphate + CO2 + diphosphate. The protein operates within cofactor biosynthesis; 5,6,7,8-tetrahydromethanopterin biosynthesis. In terms of biological role, catalyzes the condensation of 4-hydroxybenzoate (HB) with 5-phospho-alpha-D-ribose 1-diphosphate (PRPP) to produce beta-ribofuranosylphenol 5'-phosphate (beta-RFH-P). Also catalyzes the condensation of 4-aminobenzoate (pABA) with PRPP to produce beta-ribofuranosylaminobenzene 5'-phosphate (beta-RFA-P). Only 4-hydroxybenzoate is known to be biosynthesized by methanogenic archaea, but 4-aminobenzoate can be used as substrate by growing methanogens when it is present in the growth medium. In Methanothermobacter thermautotrophicus (strain ATCC 29096 / DSM 1053 / JCM 10044 / NBRC 100330 / Delta H) (Methanobacterium thermoautotrophicum), this protein is Beta-ribofuranosylphenol 5'-phosphate synthase.